The following is a 128-amino-acid chain: Capsid protein (128 aa).

Arginine 40, arginine 46, alanine 53, arginine 55, lysine 59, aspartate 61, valine 84, serine 86, and threonine 90 together coordinate RNA.

Belongs to the Leviviricetes capsid protein family. In terms of assembly, homodimer. The dimers in the capsid are covalently linked with disulfide bridges. The homodimers binds to the viral RNA via an operator hairpin, but also to many other RNA sequences in the viral genome; this interaction probably shifts the virus from the replicative to the assembly phase and ensures specific encapsidation of the viral genome.

It is found in the virion. Capsid protein self-assembles to form an icosahedral capsid with a T=3 symmetry, about 26 nm in diameter, and consisting of 89 capsid proteins dimers (178 capsid proteins). Involved in viral genome encapsidation through the interaction between a capsid protein dimer and the multiple packaging signals present in the RNA genome. Functionally, acts as a translational repressor of viral replicase synthesis late in infection. This latter function is the result of capsid protein interaction with an RNA hairpin which contains the replicase ribosome-binding site. The chain is Capsid protein from Pseudomonas aeruginosa (Bacteriophage PP7).